Here is a 104-residue protein sequence, read N- to C-terminus: L-rhamnose mutarotase (104 aa).

Residue Tyr-18 coordinates substrate. The Proton donor role is filled by His-22. Substrate-binding positions include Tyr-41 and 76–77 (WW).

This sequence belongs to the rhamnose mutarotase family. In terms of assembly, homodimer.

The protein localises to the cytoplasm. The enzyme catalyses alpha-L-rhamnose = beta-L-rhamnose. It participates in carbohydrate metabolism; L-rhamnose metabolism. Involved in the anomeric conversion of L-rhamnose. The sequence is that of L-rhamnose mutarotase from Shigella sonnei (strain Ss046).